The chain runs to 413 residues: Multifunctional CCA protein (413 aa).

Residues G8 and R11 each coordinate ATP. CTP contacts are provided by G8 and R11. Residues D21 and D23 each coordinate Mg(2+). ATP is bound by residues R91, R137, and R140. CTP is bound by residues R91, R137, and R140. The HD domain occupies 228–329; the sequence is TGIHTLMVLE…VKLFDKADLW (102 aa).

Belongs to the tRNA nucleotidyltransferase/poly(A) polymerase family. Bacterial CCA-adding enzyme type 1 subfamily. Monomer. Can also form homodimers and oligomers. The cofactor is Mg(2+). Ni(2+) is required as a cofactor.

It carries out the reaction a tRNA precursor + 2 CTP + ATP = a tRNA with a 3' CCA end + 3 diphosphate. It catalyses the reaction a tRNA with a 3' CCA end + 2 CTP + ATP = a tRNA with a 3' CCACCA end + 3 diphosphate. Its function is as follows. Catalyzes the addition and repair of the essential 3'-terminal CCA sequence in tRNAs without using a nucleic acid template. Adds these three nucleotides in the order of C, C, and A to the tRNA nucleotide-73, using CTP and ATP as substrates and producing inorganic pyrophosphate. tRNA 3'-terminal CCA addition is required both for tRNA processing and repair. Also involved in tRNA surveillance by mediating tandem CCA addition to generate a CCACCA at the 3' terminus of unstable tRNAs. While stable tRNAs receive only 3'-terminal CCA, unstable tRNAs are marked with CCACCA and rapidly degraded. The protein is Multifunctional CCA protein of Shewanella loihica (strain ATCC BAA-1088 / PV-4).